The primary structure comprises 21 residues: Agglutinin beta-1 chain (21 aa).

A compositionally biased stretch (polar residues) spans 1 to 10 (NGPNGKSQSI). The segment at 1–21 (NGPNGKSQSIIVGPWGDRVTN) is disordered.

This sequence belongs to the jacalin lectin family. In terms of assembly, formed of four alpha chains and four beta chains.

Its function is as follows. D-galactose-specific lectin, binds the T-antigen structure Gal-beta1,3-GalNAc. This is Agglutinin beta-1 chain from Maclura pomifera (Osage orange).